The following is a 107-amino-acid chain: Ferredoxin (107 aa).

2 consecutive 4Fe-4S ferredoxin-type domains span residues 2-30 and 31-60; these read TYVVTDECVKCKYTDCVEVCPVDCFYEGE and FMLVINPDECIDCGVCVPDCPIDAIKPETP. Positions 9 and 17 each coordinate [3Fe-4S] cluster. Residues C21, C40, C43, and C46 each contribute to the [4Fe-4S] cluster site. C50 contacts [3Fe-4S] cluster.

It depends on [4Fe-4S] cluster as a cofactor. [3Fe-4S] cluster is required as a cofactor.

In terms of biological role, ferredoxins are iron-sulfur proteins that transfer electrons in a wide variety of metabolic reactions. The polypeptide is Ferredoxin (fdxA) (Rickettsia bellii (strain RML369-C)).